The sequence spans 335 residues: Ubiquinone biosynthesis protein COQ4, mitochondrial (335 aa).

The transit peptide at 1–10 (MLRLSLLRST) directs the protein to the mitochondrion. Residues His-210, Asp-211, His-214, and Glu-226 each coordinate Zn(2+).

The protein belongs to the COQ4 family. As to quaternary structure, component of a multi-subunit COQ enzyme complex, composed of at least COQ3, COQ4, COQ5, COQ6, COQ7 and COQ9. Interacts with COQ3. The cofactor is Zn(2+).

Its subcellular location is the mitochondrion inner membrane. The catalysed reaction is 4-hydroxy-3-methoxy-5-(all-trans-hexaprenyl)benzoate + H(+) = 2-methoxy-6-(all-trans-hexaprenyl)phenol + CO2. It participates in cofactor biosynthesis; ubiquinone biosynthesis. Functionally, lyase that catalyzes the C1-decarboxylation of 4-hydroxy-3-methoxy-5-(all-trans-hexaprenyl)benzoic acid into 2-methoxy-6-(all-trans-hexaprenyl)phenol during ubiquinone biosynthesis. The polypeptide is Ubiquinone biosynthesis protein COQ4, mitochondrial (Saccharomyces cerevisiae (strain AWRI1631) (Baker's yeast)).